Consider the following 619-residue polypeptide: 1-deoxy-D-xylulose-5-phosphate synthase (619 aa).

Residues histidine 80 and 121-123 (GHS) contribute to the thiamine diphosphate site. Residue aspartate 152 participates in Mg(2+) binding. Residues 153-154 (GA), asparagine 181, tyrosine 288, and glutamate 370 each bind thiamine diphosphate. Asparagine 181 contributes to the Mg(2+) binding site.

It belongs to the transketolase family. DXPS subfamily. As to quaternary structure, homodimer. Requires Mg(2+) as cofactor. It depends on thiamine diphosphate as a cofactor.

The catalysed reaction is D-glyceraldehyde 3-phosphate + pyruvate + H(+) = 1-deoxy-D-xylulose 5-phosphate + CO2. The protein operates within metabolic intermediate biosynthesis; 1-deoxy-D-xylulose 5-phosphate biosynthesis; 1-deoxy-D-xylulose 5-phosphate from D-glyceraldehyde 3-phosphate and pyruvate: step 1/1. In terms of biological role, catalyzes the acyloin condensation reaction between C atoms 2 and 3 of pyruvate and glyceraldehyde 3-phosphate to yield 1-deoxy-D-xylulose-5-phosphate (DXP). This is 1-deoxy-D-xylulose-5-phosphate synthase from Yersinia pestis (strain Pestoides F).